The following is a 373-amino-acid chain: Transaldolase (373 aa).

The Schiff-base intermediate with substrate role is filled by Lys-143.

The protein belongs to the transaldolase family. Type 2 subfamily.

It is found in the cytoplasm. It catalyses the reaction D-sedoheptulose 7-phosphate + D-glyceraldehyde 3-phosphate = D-erythrose 4-phosphate + beta-D-fructose 6-phosphate. Its pathway is carbohydrate degradation; pentose phosphate pathway; D-glyceraldehyde 3-phosphate and beta-D-fructose 6-phosphate from D-ribose 5-phosphate and D-xylulose 5-phosphate (non-oxidative stage): step 2/3. In terms of biological role, transaldolase is important for the balance of metabolites in the pentose-phosphate pathway. The polypeptide is Transaldolase (Mycobacterium ulcerans (strain Agy99)).